The chain runs to 381 residues: Succinate--CoA ligase [ADP-forming] subunit beta (381 aa).

Residues 9–236 (KELLRVAGVP…ESSEAPSEVD (228 aa)) enclose the ATP-grasp domain. Residues Lys-45, 52–54 (GRG), Ala-94, and Glu-99 contribute to the ATP site. Positions 191 and 205 each coordinate Mg(2+). Residues Asn-256 and 313-315 (GIT) contribute to the substrate site.

The protein belongs to the succinate/malate CoA ligase beta subunit family. In terms of assembly, heterotetramer of two alpha and two beta subunits. Mg(2+) is required as a cofactor.

The catalysed reaction is succinate + ATP + CoA = succinyl-CoA + ADP + phosphate. It catalyses the reaction GTP + succinate + CoA = succinyl-CoA + GDP + phosphate. It functions in the pathway carbohydrate metabolism; tricarboxylic acid cycle; succinate from succinyl-CoA (ligase route): step 1/1. Succinyl-CoA synthetase functions in the citric acid cycle (TCA), coupling the hydrolysis of succinyl-CoA to the synthesis of either ATP or GTP and thus represents the only step of substrate-level phosphorylation in the TCA. The beta subunit provides nucleotide specificity of the enzyme and binds the substrate succinate, while the binding sites for coenzyme A and phosphate are found in the alpha subunit. This chain is Succinate--CoA ligase [ADP-forming] subunit beta, found in Gemmatimonas aurantiaca (strain DSM 14586 / JCM 11422 / NBRC 100505 / T-27).